The sequence spans 339 residues: Ketol-acid reductoisomerase (NADP(+)) (339 aa).

The KARI N-terminal Rossmann domain occupies 1–182 (MRVYYDRDAD…GGGRSGIIET (182 aa)). NADP(+) is bound by residues 24–27 (YGSQ), arginine 48, serine 51, threonine 53, and 83–86 (DEHQ). Histidine 108 is an active-site residue. Residue glycine 134 participates in NADP(+) binding. Residues 183-328 (NFREECETDL…ARLRGMMPWI (146 aa)) enclose the KARI C-terminal knotted domain. Aspartate 191, glutamate 195, glutamate 227, and glutamate 231 together coordinate Mg(2+). Serine 252 contributes to the substrate binding site.

The protein belongs to the ketol-acid reductoisomerase family. The cofactor is Mg(2+).

The enzyme catalyses (2R)-2,3-dihydroxy-3-methylbutanoate + NADP(+) = (2S)-2-acetolactate + NADPH + H(+). It carries out the reaction (2R,3R)-2,3-dihydroxy-3-methylpentanoate + NADP(+) = (S)-2-ethyl-2-hydroxy-3-oxobutanoate + NADPH + H(+). Its pathway is amino-acid biosynthesis; L-isoleucine biosynthesis; L-isoleucine from 2-oxobutanoate: step 2/4. It participates in amino-acid biosynthesis; L-valine biosynthesis; L-valine from pyruvate: step 2/4. Functionally, involved in the biosynthesis of branched-chain amino acids (BCAA). Catalyzes an alkyl-migration followed by a ketol-acid reduction of (S)-2-acetolactate (S2AL) to yield (R)-2,3-dihydroxy-isovalerate. In the isomerase reaction, S2AL is rearranged via a Mg-dependent methyl migration to produce 3-hydroxy-3-methyl-2-ketobutyrate (HMKB). In the reductase reaction, this 2-ketoacid undergoes a metal-dependent reduction by NADPH to yield (R)-2,3-dihydroxy-isovalerate. The polypeptide is Ketol-acid reductoisomerase (NADP(+)) (Caulobacter vibrioides (strain ATCC 19089 / CIP 103742 / CB 15) (Caulobacter crescentus)).